The sequence spans 1170 residues: Glucose transport transcription regulator RGT1 (1170 aa).

Positions 1–22 (MNELNTVSTNSSDSTKNGGTSN) are enriched in polar residues. The segment at 1 to 46 (MNELNTVSTNSSDSTKNGGTSNSPDDMDSAAAASHAIKKRTKASRA) is disordered. The segment at residues 47-76 (CDQCRKKKIKCDYKDEKGVCSNCQRNGDRC) is a DNA-binding region (zn(2)-C6 fungal-type). Positions 77 to 149 (SFDRVPLKRG…PSTPSRSNSV (73 aa)) are disordered. The span at 99–108 (RTNEIQDHNN) shows a compositional bias: basic and acidic residues. A compositionally biased stretch (low complexity) spans 113-138 (NTFDNSNNTLNNNTGNSGDNGINSNT). The span at 139-149 (VPSTPSRSNSV) shows a compositional bias: polar residues. Ser-202, Ser-205, Ser-208, and Ser-229 each carry phosphoserine. 5 disordered regions span residues 226–254 (VQQSPITNKHTNDSGNANGSVTGSGSASG), 269–288 (APTDDHNGEQTRRSSSIPSL), 293–323 (SNSLLLGGQPQLPPPQQQSQPQAHQQKLQQG), 384–506 (AQQT…HPMT), and 944–977 (NYRPPNPPANNPTVQEGPSAMGSSPVAGNLSAAP). Residues 239-250 (SGNANGSVTGSG) are compositionally biased toward low complexity. Basic and acidic residues predominate over residues 271–280 (TDDHNGEQTR). Residues Ser-283 and Ser-284 each carry the phosphoserine modification. Low complexity-rich tracts occupy residues 293–302 (SNSLLLGGQP), 309–323 (QQSQPQAHQQKLQQG), and 385–397 (QQTQRPQGQQVPQ). Residues Ser-410 and Ser-414 each carry the phosphoserine modification. The span at 411–422 (APVSVTLSTDRL) shows a compositional bias: polar residues. Positions 424–444 (GNENNNGEINNNNGSNNSGSS) are enriched in low complexity. The segment covering 445 to 457 (KDTSQHSQESVTT) has biased composition (polar residues). Basic residues predominate over residues 473–488 (STKKRRKSYVSKKTKP). Polar residues predominate over residues 493 to 506 (SISITSKDSAHPMT). Ser-1130 bears the Phosphoserine mark.

Belongs to the EDS1/RGT1 family. Post-translationally, glucose-induced phosphorylation regulates the DNA-binding activity. Hyperphosphorylation in cells growing on high levels of glucose does prevents DNA-binding and dephosphorylation restores DNA-binding ability.

The protein resides in the nucleus. It localises to the cytoplasm. Its function is as follows. Glucose-responsive transcription factor that regulates expression of several glucose transporter (HXT) genes in response to glucose. In the absence of glucose, it functions as a transcriptional repressor, whereas high concentrations of glucose cause it to function as a transcriptional activator. In cells growing on low levels of glucose, has a neutral role, neither repressing nor activating transcription. Binds the consensus binding site sequence 5'-CGGANNA-3', of which multiple copies are present in all HXT promoters regulated by RGT1. The polypeptide is Glucose transport transcription regulator RGT1 (RGT1) (Saccharomyces cerevisiae (strain RM11-1a) (Baker's yeast)).